Reading from the N-terminus, the 161-residue chain is CASP-like protein 1C2 (161 aa).

Over 1–7 (MAKNTDR) the chain is Cytoplasmic. Residues 8-28 (ICFLVLRLLAFGATLSAAIVM) traverse the membrane as a helical segment. At 29 to 53 (ATSHERTTYLSLSIEAKYSHTPAFK) the chain is on the extracellular side. A helical membrane pass occupies residues 54-74 (YFVIANAIGSAYSLLLLFLPS). Residues 75-86 (HGSLWPLVIASD) lie on the Cytoplasmic side of the membrane. A helical membrane pass occupies residues 87-107 (VVITMFLTSSISAALSIAYVG). The Extracellular portion of the chain corresponds to 108–131 (KKGNSYAGWLPICDQVPNYCNHVT). A helical membrane pass occupies residues 132 to 152 (GALAAGFIGVVLYMVLLQYSI). Over 153 to 161 (YTKCCKSSS) the chain is Cytoplasmic.

The protein belongs to the Casparian strip membrane proteins (CASP) family. As to quaternary structure, homodimer and heterodimers.

It localises to the cell membrane. This chain is CASP-like protein 1C2, found in Vitis vinifera (Grape).